Here is a 106-residue protein sequence, read N- to C-terminus: ATP-dependent Clp protease adapter protein ClpS (106 aa).

Belongs to the ClpS family. As to quaternary structure, binds to the N-terminal domain of the chaperone ClpA.

Functionally, involved in the modulation of the specificity of the ClpAP-mediated ATP-dependent protein degradation. This chain is ATP-dependent Clp protease adapter protein ClpS, found in Vibrio campbellii (strain ATCC BAA-1116).